A 337-amino-acid polypeptide reads, in one-letter code: GTPase Obg (337 aa).

The Obg domain occupies 4–162 (SNFVDYAKIH…RQIVFQLKLL (159 aa)). Residues 163–329 (ADVGLVGFPN…LKDLLWEKLR (167 aa)) enclose the OBG-type G domain. GTP is bound by residues 169–176 (GFPNTGKS), 194–198 (FTTLE), 216–219 (DIPG), 283–286 (SKSD), and 310–312 (SSF). Residues serine 176 and threonine 196 each coordinate Mg(2+).

It belongs to the TRAFAC class OBG-HflX-like GTPase superfamily. OBG GTPase family. As to quaternary structure, monomer. Requires Mg(2+) as cofactor.

It is found in the cytoplasm. In terms of biological role, an essential GTPase which binds GTP, GDP and possibly (p)ppGpp with moderate affinity, with high nucleotide exchange rates and a fairly low GTP hydrolysis rate. Plays a role in control of the cell cycle, stress response, ribosome biogenesis and in those bacteria that undergo differentiation, in morphogenesis control. This Azobacteroides pseudotrichonymphae genomovar. CFP2 protein is GTPase Obg.